The chain runs to 973 residues: MKTSIRKFLISTTLAPCFASTAFTVEVIMPSENFDGSSGKIFPYTTLSDPRGTLCIFSGDLYIANLDNAISRTSSSCFSNRAGALQILGKGGVFSFLNIRSSADGAAISSVITQNPELCPLSFSGFSQMIFDNCESLTSDTSASNVIPHASAIYATTPMLFTNNDSILFQYNRSAGFGAAIRGTSITIENTKKSLLFNGNGSISNGGALTGSAAINLINNSAPVIFSTNATGIYGGAIYLTGGSMLTSGNLSGVLFVNNSSRSGGAIYANGNVTFSNNSDLTFQNNTASPQNSLPAPTPPPTPPAVTPLLGYGGAIFCTPPATPPPTGVSLTISGENSVTFLENIASEQGGALYGKKISIDSNKSTIFLGNTAGKGGAIAIPESGELSLSANQGDILFNKNLSITSGTPTRNSIHFGKDAKFATLGATQGYTLYFYDPITSDDLSAASAAATVVVNPKASADGAYSGTIVFSGETLTATEAATPANATSTLNQKLELEGGTLALRNGATLNVHNFTQDEKSVVIMDAGTTLATTNGANNTDGAITLNKLVINLDSLDGTKAAVVNVQSTNGALTISGTLGLVKNSQDCCDNHGMFNKDLQQVPILELKATSNTVTTTDFSLGTNGYQQSPYGYQGTWEFTIDTTTHTVTGNWKKTGYLPHPERLAPLIPNSLWANVIDLRAVSQASAADGEDVPGKQLSITGITNFFHANHTGDARSYRHMGGGYLINTYTRITPDAALSLGFGQLFTKSKDYLVGHGHSNVYFATVYSNITKSLFGSSRFFSGGTSRVTYSRSNEKVKTSYTKLPKGRCSWSNNCWLGELEGNLPITLSSRILNLKQIIPFVKAEVAYATHGGIQENTPEGRIFGHGHLLNVAVPVGVRFGKNSHNRPDFYTIIVAYAPDVYRHNPDCDTTLPINGATWTSIGNNLTRSTLLVQASSHTSVNDVLEIFGHCGCDIRRTSRQYTLDIGSKLRF.

The signal sequence occupies residues 1–24; sequence MKTSIRKFLISTTLAPCFASTAFT. The span at 284 to 293 shows a compositional bias: polar residues; it reads QNNTASPQNS. The disordered stretch occupies residues 284-303; it reads QNNTASPQNSLPAPTPPPTP. Positions 691 to 973 constitute an Autotransporter domain; it reads EDVPGKQLSI…TLDIGSKLRF (283 aa).

This sequence belongs to the PMP outer membrane protein family.

The protein localises to the secreted. It is found in the cell wall. It localises to the cell outer membrane. This chain is Probable outer membrane protein pmp13 (pmp13), found in Chlamydia pneumoniae (Chlamydophila pneumoniae).